Consider the following 456-residue polypeptide: tRNA modification GTPase MnmE (456 aa).

(6S)-5-formyl-5,6,7,8-tetrahydrofolate contacts are provided by Arg-24, Glu-81, and Lys-120. The TrmE-type G domain maps to 216-379 (GMTVVIAGRP…LRDHLKACMG (164 aa)). Asn-226 serves as a coordination point for K(+). GTP is bound by residues 226–231 (NAGKSS), 245–251 (TAIAGTT), 270–273 (DTAG), and 335–338 (NKAD). Position 230 (Ser-230) interacts with Mg(2+). K(+) is bound by residues Thr-245, Ile-247, and Thr-250. Thr-251 lines the Mg(2+) pocket. Lys-456 serves as a coordination point for (6S)-5-formyl-5,6,7,8-tetrahydrofolate.

The protein belongs to the TRAFAC class TrmE-Era-EngA-EngB-Septin-like GTPase superfamily. TrmE GTPase family. In terms of assembly, homodimer. Heterotetramer of two MnmE and two MnmG subunits. Requires K(+) as cofactor.

The protein resides in the cytoplasm. In terms of biological role, exhibits a very high intrinsic GTPase hydrolysis rate. Involved in the addition of a carboxymethylaminomethyl (cmnm) group at the wobble position (U34) of certain tRNAs, forming tRNA-cmnm(5)s(2)U34. This is tRNA modification GTPase MnmE from Pseudomonas putida (strain W619).